Here is a 307-residue protein sequence, read N- to C-terminus: Mitochondrial glycine transporter (307 aa).

Solcar repeat units lie at residues 8 to 87 (PRNS…MRSS), 115 to 199 (LTMY…SKQL), and 221 to 305 (TSTT…LVKR). Transmembrane regions (helical) follow at residues 14–39 (LIGG…TRIQ), 62–88 (GTLP…RSSL), 121–146 (LLTG…VRYE), 174–197 (GFGA…EKSK), 225–251 (VNTT…KTRM), and 280–298 (GLSM…AWGI).

Belongs to the mitochondrial carrier (TC 2.A.29) family. SLC25A38 subfamily.

The protein resides in the mitochondrion inner membrane. The catalysed reaction is glycine(in) = glycine(out). In terms of biological role, mitochondrial glycine transporter that imports glycine into the mitochondrial matrix. Plays an important role in providing glycine for the first enzymatic step in heme biosynthesis, the condensation of glycine with succinyl-CoA to produce 5-aminolevulinate (ALA) in the mitochondrial matrix. This Saccharomyces cerevisiae (strain RM11-1a) (Baker's yeast) protein is Mitochondrial glycine transporter.